Reading from the N-terminus, the 128-residue chain is UPF0102 protein Acry_2261 (128 aa).

Belongs to the UPF0102 family.

This chain is UPF0102 protein Acry_2261, found in Acidiphilium cryptum (strain JF-5).